A 397-amino-acid polypeptide reads, in one-letter code: Bifunctional arginine demethylase and lysyl-hydroxylase psr-1 (397 aa).

The JmjC domain maps to 146 to 310 (RKTKKLSEDY…LVWPKTVRGR (165 aa)). Thr-189 contacts substrate. Residues His-192 and Asp-194 each contribute to the Fe cation site. Asn-202 is a binding site for 2-oxoglutarate. Lys-209 serves as a coordination point for substrate. His-278 contributes to the Fe cation binding site. 2-oxoglutarate is bound at residue Thr-290. Positions 334-344 (SCTDTPPQSLN) are enriched in polar residues. The disordered stretch occupies residues 334–383 (SCTDTPPQSLNDSSSDSSSSSSSSDDSSDSETEEDSGRCGLGNRKRRNDV). Positions 345 to 358 (DSSSDSSSSSSSSD) are enriched in low complexity.

This sequence belongs to the JMJD6 family. Interacts with ced-5 and ced-12. It depends on Fe(2+) as a cofactor.

The protein localises to the nucleus. Its function is as follows. Dioxygenase that can both act as a histone arginine demethylase and a lysyl-hydroxylase. This Caenorhabditis briggsae protein is Bifunctional arginine demethylase and lysyl-hydroxylase psr-1 (psr-1).